Here is a 202-residue protein sequence, read N- to C-terminus: Large ribosomal subunit protein bL25 (202 aa).

A disordered region spans residues 182–202 (EVEAEETEDDEAASEGEEAAE). Over residues 183–202 (VEAEETEDDEAASEGEEAAE) the composition is skewed to acidic residues.

Belongs to the bacterial ribosomal protein bL25 family. CTC subfamily. In terms of assembly, part of the 50S ribosomal subunit; part of the 5S rRNA/L5/L18/L25 subcomplex. Contacts the 5S rRNA. Binds to the 5S rRNA independently of L5 and L18.

This is one of the proteins that binds to the 5S RNA in the ribosome where it forms part of the central protuberance. The protein is Large ribosomal subunit protein bL25 of Corynebacterium glutamicum (strain R).